A 100-amino-acid polypeptide reads, in one-letter code: uncharacterized protein (100 aa).

It is found in the secreted. This is an uncharacterized protein from Mycobacterium leprae (strain TN).